The sequence spans 186 residues: MKIYVLRYGHRPGRDKRITTHVGLVARAFGAHGFILGDVIDEKVIGSIKKVMERWGGNLYIDAGVDSRKYVLEWKRRGGIVVHLTMYGLHIDDVIDEIRGLNKDILIVVGAEKVPPFFYEVADYNVAIGHQPHSEVAALAVFLDRFYMGKELHLSFPNAKLIIVPSPRGKKVKKIAEEEEGESTKD.

S-adenosyl-L-methionine contacts are provided by residues Leu84 and 110–114 (GAEKV).

This sequence belongs to the aTrm56 family. Homodimer.

Its subcellular location is the cytoplasm. It carries out the reaction cytidine(56) in tRNA + S-adenosyl-L-methionine = 2'-O-methylcytidine(56) in tRNA + S-adenosyl-L-homocysteine + H(+). Specifically catalyzes the AdoMet-dependent 2'-O-ribose methylation of cytidine at position 56 in tRNAs. The polypeptide is tRNA (cytidine(56)-2'-O)-methyltransferase (Staphylothermus marinus (strain ATCC 43588 / DSM 3639 / JCM 9404 / F1)).